Consider the following 735-residue polypeptide: Ion-translocating oxidoreductase complex subunit C (735 aa).

4Fe-4S ferredoxin-type domains are found at residues 368 to 397 and 407 to 436; these read MGAPQEEKSCIRCSACADACPADLLPQQLY and KATAHHIADCIECGACAWVCPSNIPLVQYF. C377, C380, C383, C387, C416, C419, C422, and C426 together coordinate [4Fe-4S] cluster. Residues 534–715 are disordered; it reads QARAKQAAHP…AVDPRKAAVA (182 aa). The span at 666–689 shows a compositional bias: low complexity; sequence QQAGSEPAEPAAPRKAAVEAAIAR.

It belongs to the 4Fe4S bacterial-type ferredoxin family. RnfC subfamily. As to quaternary structure, the complex is composed of six subunits: RsxA, RsxB, RsxC, RsxD, RsxE and RsxG. It depends on [4Fe-4S] cluster as a cofactor.

It localises to the cell inner membrane. Its function is as follows. Part of a membrane-bound complex that couples electron transfer with translocation of ions across the membrane. Required to maintain the reduced state of SoxR. The polypeptide is Ion-translocating oxidoreductase complex subunit C (Salmonella paratyphi B (strain ATCC BAA-1250 / SPB7)).